The primary structure comprises 680 residues: E3 ubiquitin-protein ligase Midline-1 (680 aa).

The segment at 10–60 adopts an RING-type zinc-finger fold; sequence CPICLELFEDPLLLPCAHSLCFNCAHRILVSHCATNEPVESINAFQCPTCR. Phosphoserine is present on residues Ser-92 and Ser-96. 2 B box-type zinc fingers span residues 116–165 and 172–212; these read KVLC…IEPI and GLMC…VAAL. Zn(2+)-binding residues include Cys-119, Cys-122, Cys-134, Cys-137, Cys-142, Cys-145, His-150, His-159, Cys-175, His-178, Cys-198, and His-204. The stretch at 205–264 forms a coiled coil; sequence RDHQVAALSERYDKLKQNLESNLTNLIKRNTELETLLAKLIQTCQHVEVNASRQEAKLTE. Residues 320 to 379 enclose the COS domain; it reads LKENDHARFLQTAKNITERVSMATASSQVLIPEINLNDTFDTFALDFSREKKLLECLDYL. The region spanning 384–494 is the Fibronectin type-III domain; it reads PPAIREELCT…RSSEPGKLKT (111 aa). Over residues 484–498 the composition is skewed to polar residues; that stretch reads SRSSEPGKLKTNSQP. Disordered stretches follow at residues 484 to 503 and 516 to 535; these read SRSSEPGKLKTNSQPFRLDP and NLTVERDESSSKKSHAPERF. In terms of domain architecture, B30.2/SPRY spans 495 to 672; that stretch reads NSQPFRLDPK…IVTGLPIPDH (178 aa). Residues 516 to 533 show a composition bias toward basic and acidic residues; the sequence is NLTVERDESSSKKSHAPE. Phosphoserine is present on Ser-524.

Belongs to the TRIM/RBCC family. In terms of assembly, homodimer or heterodimer with MID2. Interacts with IGBP1. Post-translationally, phosphorylated. In terms of tissue distribution, ubiquitously expressed in fetus and adult. At 9 dpc-10.5 dpc, highest expression found in frontonasal processes, branchial arches and CNS. From 12.5 dpc to 16.5 dpc, high levels found in rostral part of CNS. At 14.5 dpc, begins to be highly expressed in kidney and lung. At 16.5 dpc, highly expressed in the mucosa of the hindgut and cutaneous region of the stomach.

Its subcellular location is the cytoplasm. It localises to the cytoskeleton. It carries out the reaction S-ubiquitinyl-[E2 ubiquitin-conjugating enzyme]-L-cysteine + [acceptor protein]-L-lysine = [E2 ubiquitin-conjugating enzyme]-L-cysteine + N(6)-ubiquitinyl-[acceptor protein]-L-lysine.. In terms of biological role, has E3 ubiquitin ligase activity towards IGBP1, promoting its monoubiquitination, which results in deprotection of the catalytic subunit of protein phosphatase PP2A, and its subsequent degradation by polyubiquitination. This Mus musculus (Mouse) protein is E3 ubiquitin-protein ligase Midline-1 (Mid1).